A 193-amino-acid chain; its full sequence is Protein SINE3 (193 aa).

Positions 15 to 35 (SELGAKRLKDPEMKNRKVTTE) are disordered. A compositionally biased stretch (basic and acidic residues) spans 18 to 35 (GAKRLKDPEMKNRKVTTE). In terms of domain architecture, KASH spans 155 to 193 (VTVKFRIVLLSFILWAILAAIVVFFSSGEERAYRGPLPT). Residues 161–181 (IVLLSFILWAILAAIVVFFSS) traverse the membrane as a helical segment. A Required for nuclear localization motif is present at residues 190-193 (PLPT).

As to quaternary structure, interacts with SUN1 and SUN2.

The protein resides in the nucleus membrane. This is Protein SINE3 from Arabidopsis thaliana (Mouse-ear cress).